Consider the following 265-residue polypeptide: UPF0354 protein GWCH70_2742 (265 aa).

It belongs to the UPF0354 family.

The protein is UPF0354 protein GWCH70_2742 of Geobacillus sp. (strain WCH70).